The chain runs to 655 residues: MGIFSIANQHIRFAVKLATAIVLALFVGFHFQLETPRWAVLTAAIVAAGPAFAAGGEPYSGAIRYRGFLRIIGTFIGCIAGLVIIIAMIRAPLLMILVCCIWAGFCTWISSLVRIENSYAWGLAGYTALIIVITIQPEPLLTPQFAVERCSEIVIGIVCAIMADLLFSPRSIKQEVDRELESLLVAQYQLMQLCIKHGDGEVVDKAWGDLVRRTTALQGMRSNLNMESSRWARANRRLKAINTLSLTLITQSCETYLIQNTRPELITDTFREFFDTPVETAQDVHKQLKRLRRVIAWTGERETPVTIYSWVAAATRYQLLKRGVISNTKINATEEEILQGEPEVKVESAERHHAMVNFWRTTLSCILGTLFWLWTGWTSGSGAMVMIAVVTSLAMRLPNPRMVAIDFIYGTLAALPLGLLYFLVIIPNTQQSMLLLCISLAVLGFFLGIEVQKRRLGSMGALASTINIIVLDNPMTFHFSQFLDSALGQIVGCVLAFTVILLVRDKSRDRTGRVLLNQFVSAAVSAMTTNVARRKENHLPALYQQLFLLMNKFPGDLPKFRLALTMIIAHQRLRDAPIPVNEDLSAFHRQMRRTADHVISARSDDKRRRYFGQLLEELEIYQEKLRIWQAPPQVTEPVHRLAGMLHKYQHALTDS.

The Periplasmic portion of the chain corresponds to methionine 1–arginine 12. The helical transmembrane segment at phenylalanine 13–leucine 33 threads the bilayer. Residues glutamate 34–arginine 37 are Cytoplasmic-facing. The chain crosses the membrane as a helical span at residues tryptophan 38–proline 58. The Periplasmic segment spans residues tyrosine 59 to phenylalanine 68. A helical transmembrane segment spans residues leucine 69 to isoleucine 89. Over arginine 90–proline 92 the chain is Cytoplasmic. Residues leucine 93–valine 113 form a helical membrane-spanning segment. Residues arginine 114 to alanine 120 lie on the Periplasmic side of the membrane. A helical membrane pass occupies residues tryptophan 121 to leucine 141. The Cytoplasmic portion of the chain corresponds to threonine 142–serine 151. Residues glutamate 152–isoleucine 172 traverse the membrane as a helical segment. Over lysine 173 to threonine 369 the chain is Periplasmic. Residues leucine 370 to valine 390 traverse the membrane as a helical segment. The Cytoplasmic segment spans residues threonine 391 to aspartate 406. The chain crosses the membrane as a helical span at residues phenylalanine 407–proline 427. Topologically, residues asparagine 428–glutamine 430 are periplasmic. The chain crosses the membrane as a helical span at residues glutamine 431 to valine 451. Residues glutamine 452–serine 458 are Cytoplasmic-facing. Residues methionine 459–phenylalanine 479 form a helical membrane-spanning segment. Topologically, residues serine 480 to glutamine 481 are periplasmic. The helical transmembrane segment at phenylalanine 482–leucine 502 threads the bilayer. At valine 503–serine 655 the chain is on the cytoplasmic side.

Belongs to the aromatic acid exporter ArAE (TC 2.A.85) family.

Its subcellular location is the cell inner membrane. In terms of biological role, forms an efflux pump with AaeA. Could function as a metabolic relief valve, allowing to eliminate certain compounds when they accumulate to high levels in the cell. The protein is p-hydroxybenzoic acid efflux pump subunit AaeB of Shigella flexneri.